The following is a 404-amino-acid chain: Retrotransposable element SLACS 45 kDa protein (404 aa).

2 stretches are compositionally biased toward polar residues: residues 1 to 11 and 29 to 41; these read MVRNLRSSEPQ and PALN…QKQV. Disordered stretches follow at residues 1 to 62, 86 to 111, 134 to 251, 317 to 341, and 369 to 404; these read MVRN…NTSI, KKAA…GRPP, LGKG…KKGA, CRQQ…GAVS, and PKLP…AGPP. Over residues 98–111 the composition is skewed to basic and acidic residues; that stretch reads VNKEGNRKKYGRPP. A compositionally biased stretch (polar residues) spans 141-151; the sequence is TAHTKSNQSRV. The C2H2-type zinc-finger motif lies at 300–321; it reads CPVCGFAHPEETITVTHCRQQH. The segment covering 395–404 has biased composition (basic and acidic residues); sequence HHCDRSAGPP.

In Trypanosoma brucei gambiense, this protein is Retrotransposable element SLACS 45 kDa protein.